Here is a 600-residue protein sequence, read N- to C-terminus: Elongation factor 4 (600 aa).

The tr-type G domain occupies Asp4–Glu186. GTP-binding positions include Asp16 to Thr21 and Asn133 to Asp136.

This sequence belongs to the TRAFAC class translation factor GTPase superfamily. Classic translation factor GTPase family. LepA subfamily.

Its subcellular location is the cell inner membrane. It carries out the reaction GTP + H2O = GDP + phosphate + H(+). Its function is as follows. Required for accurate and efficient protein synthesis under certain stress conditions. May act as a fidelity factor of the translation reaction, by catalyzing a one-codon backward translocation of tRNAs on improperly translocated ribosomes. Back-translocation proceeds from a post-translocation (POST) complex to a pre-translocation (PRE) complex, thus giving elongation factor G a second chance to translocate the tRNAs correctly. Binds to ribosomes in a GTP-dependent manner. This is Elongation factor 4 from Geobacter sulfurreducens (strain ATCC 51573 / DSM 12127 / PCA).